A 248-amino-acid polypeptide reads, in one-letter code: Tabserin (248 aa).

An N-terminal signal peptide occupies residues 1-19 (MLKYSALFLYLIYVGGSES). The region spanning 24 to 248 (IVGGVPVAEE…PYFENGLRKR (225 aa)) is the Peptidase S1 domain. An intrachain disulfide couples cysteine 49 to cysteine 65. Residues histidine 64 and aspartate 111 each act as charge relay system in the active site. 2 cysteine pairs are disulfide-bonded: cysteine 175-cysteine 189 and cysteine 201-cysteine 226. Serine 205 (charge relay system) is an active-site residue.

Belongs to the peptidase S1 family. Expressed in salivary glands.

Its subcellular location is the secreted. In terms of biological role, serine protease that inhibits blood coagulation in a dose-dependent manner. May act by destroying coagulant factors to inhibit blood coagulation. In Tabanus yao (Horsefly), this protein is Tabserin.